The following is a 587-amino-acid chain: F-box/WD repeat-containing protein sel-10 (587 aa).

A compositionally biased stretch (basic and acidic residues) spans 1–11 (MWPRNDVHMDD). Residues 1-53 (MWPRNDVHMDDGSMTPEDQEPVTDNDMEYNDNGEESSYSNGSSSSYNADKLSS) are disordered. Residues 17-34 (EDQEPVTDNDMEYNDNGE) are compositionally biased toward acidic residues. Residues 35–47 (ESSYSNGSSSSYN) are compositionally biased toward low complexity. The 47-residue stretch at 121–167 (RDFLSCLPVELGMKILHNLTGYDLLKVAQVSKNWKLISEIDKIWKSL) folds into the F-box domain. 7 WD repeats span residues 253-291 (GHEDHVITCMQIHDDVLVTGSDDNTLKVWCIDKGEVMYT), 294-333 (GHTGGVWTSQISQCGRYIVSGSTDRTVKVWSTVDGSLLHT), 336-373 (GHTSTVRCMAMAGSILVTGSRDTTLRVWDVESGRHLAT), 376-415 (GHHAAVRCVQFDGTTVVSGGYDFTVKIWNAHTGRCIRTLT), 416-455 (GHNNRVYSLLFESERSIVCSGSLDTSIRVWDFTRPEGQEC), 461-498 (GHTSLTSGMQLRGNILVSCNADSHVRVWDIHEGTCVHM), and 501-539 (GHRSAITSLQWFGRNMVATSSDDGTVKLWDIERGALIRD).

As to quaternary structure, probable component of the SCF(sel-10) E3 ubiquitin-protein ligase complex which includes skr-1 and F-box domain-containing protein sel-10 as a substrate recognition component. Interacts with fem-1, fem-2, and fem-3. Interacts with the intracellular domain of glp-1 and sel-12. Interacts with lin-12. Interacts with skr-1. Interacts with zyg-1. In terms of tissue distribution, expressed in tail and head neurons.

It is found in the cell projection. The protein resides in the axon. It localises to the cytoplasm. Functionally, probable substrate recognition component of SCF (SKP1-CUL-F-box protein) E3 ubiquitin-protein ligase complex, which mediates the ubiquitination and subsequent proteasomal degradation of target proteins. Regulates synapse elimination in early development in the motor neuron HSNL. Cell autonomous negative regulator of lin-12/Notch-mediated signaling, with respect to lin-12 activity in cell fate decisions and tumorigenesis. May target the intracellular domains of lin-12/Notch proteins for ubiquitin-dependent degradation. Involved in sex determination by promoting female development. Potential regulator of presenilin. May have a role in egg laying. Regulates zyg-1 levels (possibly redundantly with lin-23) to control centrosome duplication during mitosis. Negatively regulates lin-45 activity and protein stability, probably by targeting it for ubiquitination and proteasomal degradation. This chain is F-box/WD repeat-containing protein sel-10, found in Caenorhabditis elegans.